The chain runs to 270 residues: Small ribosomal subunit protein bS1m (270 aa).

Residues T218–Q250 form a disordered region.

It belongs to the bacterial ribosomal protein bS1 family.

Its subcellular location is the mitochondrion. This is Small ribosomal subunit protein bS1m (RPS1) from Marchantia polymorpha (Common liverwort).